Reading from the N-terminus, the 322-residue chain is Pre-mRNA-splicing factor NTR2 (322 aa).

The segment at 1-30 is disordered; it reads MAIKKRNKIRLPSGSPEEVGIDGSAHKPMQ. Residue Ser40 is modified to Phosphoserine. The tract at residues 113–137 is disordered; it reads LLSDSSEAGSSSEGEHISSIPTRGE. Over residues 115 to 132 the composition is skewed to low complexity; the sequence is SDSSEAGSSSEGEHISSI. Phosphoserine occurs at positions 153 and 197.

Component of the NTR complex (NTC-related complex), composed of NTR1, NTR2 and PRP43. Interacts with CLF1, NTR1 and PRP43.

It is found in the cytoplasm. Its subcellular location is the nucleus. Its function is as follows. Involved in pre-mRNA splicing and spliceosome disassembly. Promotes release of excised lariat intron from the spliceosome by acting as a receptor for PRP43. This targeting of PRP43 leads to disassembly of the spliceosome with the separation of the U2, U5, U6 snRNPs and the NTC complex. The protein is Pre-mRNA-splicing factor NTR2 (NTR2) of Saccharomyces cerevisiae (strain ATCC 204508 / S288c) (Baker's yeast).